The sequence spans 192 residues: Ribose 1,5-bisphosphate phosphokinase PhnN (192 aa).

15–22 (GPSGAGKD) is an ATP binding site.

This sequence belongs to the ribose 1,5-bisphosphokinase family.

The catalysed reaction is alpha-D-ribose 1,5-bisphosphate + ATP = 5-phospho-alpha-D-ribose 1-diphosphate + ADP. Its pathway is metabolic intermediate biosynthesis; 5-phospho-alpha-D-ribose 1-diphosphate biosynthesis; 5-phospho-alpha-D-ribose 1-diphosphate from D-ribose 5-phosphate (route II): step 3/3. Functionally, catalyzes the phosphorylation of ribose 1,5-bisphosphate to 5-phospho-D-ribosyl alpha-1-diphosphate (PRPP). In Brucella abortus biovar 1 (strain 9-941), this protein is Ribose 1,5-bisphosphate phosphokinase PhnN.